The chain runs to 213 residues: MTITKKLSRTEMAQRVAADIQEGAYVNLGIGAPTLVANYLGDKEVFLHSENGLLGMGPSPAPGEEDDDLINAGKQHVTLLTGGAFFHHADSFSMMRGGHLDIAVLGAFQVSVKGDLANWHTGAEGSIPAVGGAMDLATGARQVFVMMDHLTKTGESKLVPECTYPLTGIACVSRIYTDLAVLEVTPEGLKVVEICADIDFDELQKLSGVPLIK.

Glutamate 50 is an active-site residue.

Belongs to the 3-oxoacid CoA-transferase subunit B family. In terms of assembly, heterodimer.

The catalysed reaction is 3-oxoadipate + succinyl-CoA = 3-oxoadipyl-CoA + succinate. Its pathway is aromatic compound metabolism; beta-ketoadipate pathway; acetyl-CoA and succinyl-CoA from 3-oxoadipate: step 1/2. The sequence is that of 3-oxoadipate CoA-transferase subunit B (pcaJ) from Pseudomonas putida (strain ATCC 47054 / DSM 6125 / CFBP 8728 / NCIMB 11950 / KT2440).